The chain runs to 352 residues: Molybdenum import ATP-binding protein ModC (352 aa).

One can recognise an ABC transporter domain in the interval 1–229 (MLELNFSQTL…SVMNPWLPKE (229 aa)). ATP is bound at residue 31–38 (GVSGAGKT). In terms of domain architecture, Mop spans 289–352 (QTSIRNVLRA…AQIKSVSITA (64 aa)).

This sequence belongs to the ABC transporter superfamily. Molybdate importer (TC 3.A.1.8) family. As to quaternary structure, the complex is composed of two ATP-binding proteins (ModC), two transmembrane proteins (ModB) and a solute-binding protein (ModA).

It is found in the cell inner membrane. It carries out the reaction molybdate(out) + ATP + H2O = molybdate(in) + ADP + phosphate + H(+). Functionally, part of the ABC transporter complex ModABC involved in molybdenum import. Responsible for energy coupling to the transport system. The protein is Molybdenum import ATP-binding protein ModC of Escherichia coli O6:K15:H31 (strain 536 / UPEC).